Here is a 138-residue protein sequence, read N- to C-terminus: Thyrotropin subunit beta (138 aa).

The N-terminal stretch at 1-20 (MTATFLMSLLFGLAFGQTMS) is a signal peptide. Intrachain disulfides connect Cys22–Cys72, Cys36–Cys87, Cys39–Cys125, Cys47–Cys103, Cys51–Cys105, and Cys108–Cys115. N-linked (GlcNAc...) asparagine glycosylation is present at Asn43. A propeptide spanning residues 133 to 138 (LVGFPV) is cleaved from the precursor.

The protein belongs to the glycoprotein hormones subunit beta family. As to quaternary structure, heterodimer of a common alpha chain and a unique beta chain which confers biological specificity to thyrotropin, lutropin, follitropin and gonadotropin.

Its subcellular location is the secreted. In terms of biological role, indispensable for the control of thyroid structure and metabolism. This chain is Thyrotropin subunit beta (TSHB), found in Monodelphis domestica (Gray short-tailed opossum).